We begin with the raw amino-acid sequence, 224 residues long: Synaptogyrin-2 (224 aa).

Met-1 is modified (N-acetylmethionine). Ser-3 bears the Phosphoserine mark. The MARVEL domain occupies 20 to 171; it reads FLKQPQVVVR…LAFLAYQRYK (152 aa). 4 consecutive transmembrane segments (helical) span residues 26-46, 73-93, 105-125, and 147-167; these read VVVR…IFGE, AIGV…IYFP, VIGD…GFCF, and AAIT…FLAY. Positions 196–224 are disordered; the sequence is PGVPADTYQQPPFTQNAESTEGYQPPPVY. Positions 202 to 217 are enriched in polar residues; the sequence is TYQQPPFTQNAESTEG.

It belongs to the synaptogyrin family. Post-translationally, may be tyrosine phosphorylated by Src.

Its subcellular location is the cytoplasmic vesicle membrane. The protein resides in the cytoplasmic vesicle. It is found in the secretory vesicle. The protein localises to the synaptic vesicle membrane. May play a role in regulated exocytosis. In neuronal cells, modulates the localization of synaptophysin/SYP into synaptic-like microvesicles and may therefore play a role in the formation and/or the maturation of this vesicles. May also play a role in GLUT4 storage and transport to the plasma membrane. In Bos taurus (Bovine), this protein is Synaptogyrin-2.